The chain runs to 295 residues: Nucleotide-binding protein YvcJ (295 aa).

Residue Gly16–Thr23 participates in ATP binding. Asp67 to Gly70 provides a ligand contact to GTP.

It belongs to the RapZ-like family.

Displays ATPase and GTPase activities. Can also hydrolyze pNPP. May affect the expression of competence via the phosphorylation of a cellular component. In Bacillus subtilis (strain 168), this protein is Nucleotide-binding protein YvcJ (yvcJ).